The chain runs to 256 residues: L-rhamnose 1-dehydrogenase (NAD(P)(+)) (256 aa).

Residues Gly-12, Ser-14, Arg-15, Ile-17, Ser-37, Asp-66, Ala-67, and Asn-93 each coordinate NADP(+). Ser-146 functions as the Proton donor in the catalytic mechanism. Ser-146, Ser-148, Gln-156, and Tyr-159 together coordinate beta-L-rhamnose. Tyr-159 and Lys-163 together coordinate NADP(+). Tyr-159 (proton acceptor) is an active-site residue. Lys-163 (lowers pKa of active site Tyr) is an active-site residue. Thr-191 provides a ligand contact to beta-L-rhamnose. An NADP(+)-binding site is contributed by Ile-192. Asn-197 provides a ligand contact to beta-L-rhamnose.

Belongs to the short-chain dehydrogenases/reductases (SDR) family.

It catalyses the reaction L-rhamnofuranose + NAD(+) = L-rhamnono-1,4-lactone + NADH + H(+). The catalysed reaction is L-rhamnofuranose + NADP(+) = L-rhamnono-1,4-lactone + NADPH + H(+). It participates in carbohydrate degradation; L-rhamnose degradation. Functionally, NAD(P)-dependent dehydrogenase that catalyzes the oxidation of L-rhamnose to L-rhamnono-1,4-lactone. Also shows high activity with L-lyxose and low activity with L-mannose and L-fucose. Can utilize either NAD(+) or NADP(+), with a strong preference for NADP(+). Catalyzes the first step in an alternative pathway for rhamnose utilization that does not involve phosphorylated intermediates. The polypeptide is L-rhamnose 1-dehydrogenase (NAD(P)(+)) (Azotobacter vinelandii (strain DJ / ATCC BAA-1303)).